The following is a 508-amino-acid chain: Cytochrome P450 monooxygenase pkfB (508 aa).

The chain crosses the membrane as a helical span at residues 9-29 (FSLGLSQILVCLALLYAAIHI). N-linked (GlcNAc...) asparagine glycosylation is found at Asn-57 and Asn-305. Cys-450 serves as a coordination point for heme.

Belongs to the cytochrome P450 family. Requires heme as cofactor.

It localises to the membrane. It participates in secondary metabolite biosynthesis. Its function is as follows. Cytochrome P450 monooxygenase; part of the gene cluster that mediates the biosynthesis of aspernidine A, a prenylated isoindolinone. The starting point of the biosynthesis of aspernidin A is the production of orsellinaldehyde by the non-reducing polyketide synthase pkfA. Hydroxylation, methylation of one of the phenol groups, and prenylation, presumably catalyzed by the prenyltransferase pkfE, would be needed to yield aspernidine D. Subsequently, the cytochrome P450 monooxygenase pkfB is responsible for hydroxylation of aspernidine D to yield aspernidine E. The dehydrogenase pkfF may be responsible for further oxidation of aspernidine E to form a dialdehyde intermediate which is further transformed in a series of steps, some of which are enzyme-mediated, to generate aspernidine A. The possibility that additional enzymes outside of the cluster are involved in aspernidine A biosynthesis cannot be excluded. This Emericella nidulans (strain FGSC A4 / ATCC 38163 / CBS 112.46 / NRRL 194 / M139) (Aspergillus nidulans) protein is Cytochrome P450 monooxygenase pkfB.